We begin with the raw amino-acid sequence, 706 residues long: Complement C1r-B subcomponent (706 aa).

An N-terminal signal peptide occupies residues 1-16; that stretch reads MWLFALLVTLFYGVEG. A CUB 1 domain is found at 17 to 140; sequence SIYLPQKLYG…KGFLAYYQAV (124 aa). 3 residues coordinate Ca(2+): E65, D73, and D118. A disulfide bridge connects residues C70 and C88. N124 carries N-linked (GlcNAc...) asparagine glycosylation. Ca(2+) contacts are provided by D141, L142, and E144. The EGF-like; calcium-binding domain maps to 141 to 189; that stretch reads DLDECASQPNSVEEGLQPRCQHLCHNYVGGYFCSCHPGYELQKDGQSCQ. 4 disulfides stabilise this stretch: C145–C164, C160–C173, C175–C188, and C192–C219. Ca(2+) contacts are provided by N166, Y167, and G170. N166 is modified ((3R)-3-hydroxyasparagine). A CUB 2 domain is found at 192-304; it reads CSSELYTEPS…RGWKLHYTTE (113 aa). Residue S205 is modified to Phosphoserine; by CK2. An N-linked (GlcNAc...) asparagine glycan is attached at N220. Ca(2+) is bound by residues D242, D252, D289, and D293. A disulfide bridge links C249 with C267. Sushi domains follow at residues 306–372 and 373–448; these read IKCP…RCKI and KNCG…RCLP. Disulfide bonds link C308/C357, C337/C370, C375/C428, C405/C446, and C450/C578. One can recognise a Peptidase S1 domain in the interval 463-703; that stretch reads IIGGQPARPG…YVDWIKKEMG (241 aa). Active-site charge relay system residues include H501 and D558. The N-linked (GlcNAc...) asparagine glycan is linked to N582. 2 cysteine pairs are disulfide-bonded: C621/C640 and C651/C681. Residue S655 is the Charge relay system of the active site.

The protein belongs to the peptidase S1 family. Core component of the complement C1 complex, a calcium-dependent complex composed of 1 molecule of the C1Q subcomplex, 2 molecules of C1R and 2 molecules of C1S. The C1Q subcomplex is composed 18 subunits: 3 chains of C1QA, C1QB, and C1QC trimerize to form 6 collagen-like triple helices connected to six globular ligand-recognition modules. Within the C1 complex, C1R is a dimer of identical chains, each of which is activated by cleavage into two chains, heavy and light, connected by disulfide bonds. Cleaved and activated by autocatalytic processing to generate Complement C1r subcomponent heavy and light chains that are connected by disulfide bonds. Post-translationally, the iron and 2-oxoglutarate dependent 3-hydroxylation of aspartate and asparagine is (R) stereospecific within EGF domains.

Its subcellular location is the secreted. The protein resides in the cell surface. It catalyses the reaction Selective cleavage of Lys(or Arg)-|-Ile bond in complement subcomponent C1s to form the active form of C1s (EC 3.4.21.42).. Its activity is regulated as follows. Activated by the C1Q subcomplex of the C1 complex following C1Q binding to immunoglobulins (IgG or IgM) complexed with antigens to form antigen-antibody complexes on the surface of pathogens. Immunoglobulin-binding promotes autoactivation of C1R, which results in the cleavage of the Arg-Ile bond in the catalytic domain. Serine protease component of the complement C1 complex, a multiprotein complex that initiates the classical pathway of the complement system, a cascade of proteins that leads to phagocytosis and breakdown of pathogens and signaling that strengthens the adaptive immune system. C1R catalyzes the first enzymatic step in the classical complement pathway: it is activated by the C1Q subcomplex of the C1 complex, which associates with IgG or IgM immunoglobulins complexed with antigens to form antigen-antibody complexes on the surface of pathogens. Immunoglobulin-binding promotes the autocatalytic cleavage and activation of C1R. Activated C1R then cleaves and activates C1S, the second protease of the classical complement pathway. It is unclear if C1R activates C1S within single, strained C1 complexes or between neighboring C1 complexes on surfaces. This Mus musculus (Mouse) protein is Complement C1r-B subcomponent (C1rb).